Here is a 119-residue protein sequence, read N- to C-terminus: Holo-[acyl-carrier-protein] synthase (119 aa).

Residues D8 and E58 each contribute to the Mg(2+) site.

This sequence belongs to the P-Pant transferase superfamily. AcpS family. The cofactor is Mg(2+).

It localises to the cytoplasm. The catalysed reaction is apo-[ACP] + CoA = holo-[ACP] + adenosine 3',5'-bisphosphate + H(+). In terms of biological role, transfers the 4'-phosphopantetheine moiety from coenzyme A to a Ser of acyl-carrier-protein. The polypeptide is Holo-[acyl-carrier-protein] synthase (Streptococcus mutans serotype c (strain ATCC 700610 / UA159)).